The following is a 336-amino-acid chain: F420-dependent glucose-6-phosphate dehydrogenase (336 aa).

Residue Asp39 coordinates coenzyme F420-(gamma-Glu)n. Catalysis depends on His40, which acts as the Proton donor. Coenzyme F420-(gamma-Glu)n is bound by residues Thr76 and 107-108; that span reads TG. The Proton acceptor role is filled by Glu109. Coenzyme F420-(gamma-Glu)n is bound by residues Asn112, 177–178, and 180–181; these read GG and EV. The substrate site is built by Thr195, Lys198, Lys259, and Arg283.

The protein belongs to the F420-dependent glucose-6-phosphate dehydrogenase family. As to quaternary structure, homodimer.

It carries out the reaction oxidized coenzyme F420-(gamma-L-Glu)(n) + D-glucose 6-phosphate + H(+) = 6-phospho-D-glucono-1,5-lactone + reduced coenzyme F420-(gamma-L-Glu)(n). In terms of biological role, catalyzes the coenzyme F420-dependent oxidation of glucose 6-phosphate (G6P) to 6-phosphogluconolactone. Appears to have a role in resistance to oxidative stress, via its consumption of G6P that serves as a source of reducing power to combat oxidative stress in mycobacteria. The polypeptide is F420-dependent glucose-6-phosphate dehydrogenase (Mycobacterium leprae (strain Br4923)).